The chain runs to 390 residues: Queuine tRNA-ribosyltransferase (390 aa).

Catalysis depends on aspartate 92, which acts as the Proton acceptor. Substrate contacts are provided by residues 92-96 (DSGGF), aspartate 146, glutamine 195, and glycine 222. The interval 253–259 (GVGTPED) is RNA binding. Aspartate 272 serves as the catalytic Nucleophile. The tract at residues 277–281 (TRNAR) is RNA binding; important for wobble base 34 recognition. Zn(2+)-binding residues include cysteine 310, cysteine 312, cysteine 315, and histidine 354.

The protein belongs to the queuine tRNA-ribosyltransferase family. As to quaternary structure, homodimer. Within each dimer, one monomer is responsible for RNA recognition and catalysis, while the other monomer binds to the replacement base PreQ1. Zn(2+) is required as a cofactor.

The catalysed reaction is 7-aminomethyl-7-carbaguanine + guanosine(34) in tRNA = 7-aminomethyl-7-carbaguanosine(34) in tRNA + guanine. Its pathway is tRNA modification; tRNA-queuosine biosynthesis. Functionally, catalyzes the base-exchange of a guanine (G) residue with the queuine precursor 7-aminomethyl-7-deazaguanine (PreQ1) at position 34 (anticodon wobble position) in tRNAs with GU(N) anticodons (tRNA-Asp, -Asn, -His and -Tyr). Catalysis occurs through a double-displacement mechanism. The nucleophile active site attacks the C1' of nucleotide 34 to detach the guanine base from the RNA, forming a covalent enzyme-RNA intermediate. The proton acceptor active site deprotonates the incoming PreQ1, allowing a nucleophilic attack on the C1' of the ribose to form the product. After dissociation, two additional enzymatic reactions on the tRNA convert PreQ1 to queuine (Q), resulting in the hypermodified nucleoside queuosine (7-(((4,5-cis-dihydroxy-2-cyclopenten-1-yl)amino)methyl)-7-deazaguanosine). The protein is Queuine tRNA-ribosyltransferase of Paracidovorax citrulli (strain AAC00-1) (Acidovorax citrulli).